The chain runs to 499 residues: Neuronal acetylcholine receptor subunit alpha-3 (499 aa).

The N-terminal stretch at Met-1–Ala-25 is a signal peptide. At Ser-26–Ile-244 the chain is on the extracellular side. Residues Asn-49 and Asn-166 are each glycosylated (N-linked (GlcNAc...) asparagine). 2 disulfide bridges follow: Cys-153–Cys-167 and Cys-217–Cys-218. Residues Pro-245–Pro-260 form a helical membrane-spanning segment. The Cytoplasmic portion of the chain corresponds to Ser-261–Asp-262. A helical membrane pass occupies residues Cys-263–Val-279. Na(+) is bound at residue Glu-265. The Extracellular portion of the chain corresponds to Phe-280 to Tyr-301. A helical transmembrane segment spans residues Leu-302 to Leu-320. Over Asn-321–Val-468 the chain is Cytoplasmic. Phosphoserine occurs at positions 407 and 410. Residues Ile-469–Gly-487 form a helical membrane-spanning segment. At Leu-488 to Thr-499 the chain is on the extracellular side.

This sequence belongs to the ligand-gated ion channel (TC 1.A.9) family. Acetylcholine receptor (TC 1.A.9.1) subfamily. Alpha-3/CHRNA3 sub-subfamily. Neuronal AChR is composed of two different types of subunits: alpha and beta. CHRNA3/Alpha-3 subunit can be combined to CHRNB2/beta-2 or CHRNB4/beta-4 to give rise to functional receptors. Part of a complex composed of STUB1/CHIP, VCP/p97, CHRNA3, and UBXN2A that modulates the ubiquitination and endoplasmic reticulum-associated degradation (ERAD) of CHRNA3. Within the complex UBXN2A acts as a scaffold protein required for the interaction of CHRNA3 with VCP/p97, this interaction also inhibits CHRNA3 ubiquitination by STUB1/CHIP and subsequently ERAD. Interacts with UBXN2A (via SEP domain), the interaction is required for the interaction of CHRNA3 in the STUB1:VCP:UBXN2A complex. Interacts with RIC3; which is required for proper folding and assembly. Post-translationally, ubiquitinated; by STUB1/CHIP and thereafter degraded by the 26S proteosome complex. Expressed in neurons. Expressed in umbrella cells of urothelium (at protein level).

The protein resides in the synaptic cell membrane. It localises to the cell membrane. The protein localises to the endoplasmic reticulum. It is found in the golgi apparatus. The enzyme catalyses Ca(2+)(in) = Ca(2+)(out). It carries out the reaction K(+)(in) = K(+)(out). It catalyses the reaction Na(+)(in) = Na(+)(out). Its activity is regulated as follows. Activated by a myriad of ligands such as acetylcholine, cytisine, nicotine, choline and epibatidine. The heteropentamer CHRNA3:CHRNB2 activity is blocked by alpha-conotoxins ImI, ImII, PnIA, GID and MII. The heteropentamer CHRNA3:CHRNB4 activity is blocked by the alpha-conotoxin ImI and AuIB. Its function is as follows. Component of neuronal acetylcholine receptors (nAChRs) that function as pentameric, ligand-gated cation channels with high calcium permeability among other activities. nAChRs are excitatory neurotrasnmitter receptors formed by a collection of nAChR subunits known to mediate synaptic transmission in the nervous system and the neuromuscular junction. Each nAchR subunit confers differential attributes to channel properties, including activation, deactivation and desensitization kinetics, pH sensitivity, cation permeability, and binding to allosteric modulators. CHRNA3 forms heteropentameric neuronal acetylcholine receptors with CHRNB2 and CHRNB4. CHRNA3:CHRNB4 being predominant in neurons of the autonomic ganglia, it is known as ganglionic nicotinic receptor. CHRNA3:CHRNB4 also plays an important role in the habenulo-interpeduncular tract, modulating the mesolimbic dopamine system and affecting reward circuits and addiction. Hypothalamic CHRNA3:CHRNB4 nAChR activation by nicotine leads to activation of POMC neurons and a decrease in food intake. Also expressed in the urothelium where it modulates reflex bladder activity by increasing intracellular calcium through extracellular influx and basal ATP release. The chain is Neuronal acetylcholine receptor subunit alpha-3 (Chrna3) from Rattus norvegicus (Rat).